The sequence spans 1687 residues: MRMATPSSAPSVRNTEKRKNKKASSKASVSFGAPSPLSSESEDEINYMTPPEQEAQPGALAALHAEGPLAGLPVTRSDARVLIFNEWEERKKSDPWLRLDMSDKAIFRRYPHLRPKEDRPDAPSHAEDAMDAKEPVIGSILEQDDHKFYHYSVYIGGGLVMGVNNPSAAVCQATIDVEKLHLWWRPVWEPRHPLDSAELRKCVGMTVPYVATTVNCYQVCCWIVGIKDTWLKRAKISRDLPFYSPVQDWNVDPQEPFIPSKLRMVSDGILVALSAVIGRPIKNLLASVKPLNILNIVLSCDWTFSGIVNALILLAELFDIFWTPPDVTNWMISIFGEWQAEGPFDLALDVVPTLLGGIGMAFGLTSETIGRKLASTNSALKAAQEMGKFAIEVFKQIMAWIWPSEDPVPALLSNMEQAIIKNECQLENQLTAMLRDRNAGAEFLRSLDEEEQEVRKIAAKCGNSATTGTTNALLARISMARAAFEKARAEQTSRVRPVVIMVSGRPGIGKTCFCQNLAKRIAASLGDETSVGIIPRADVDHWDAYKGARVVLWDDFGMDNVVKDALRLQMLADTCPVTLNCDRIENKGKMFDSQVIIITTNQQTPVPLDYVNLEAVCRRIDFLVYAESPVVDDARARAPGDVNAVKAAMRPDYSHINFILAPQGGFDRQGNTPYGKGVTKIIGATALCARAVALVHERHDDFGLQNKVYDFDAGKITAFKAMAADAGIPWYKMAAIGCKAMGCTCVEEAMHLLKDYEVAPCQVIYNGATYNVSCIKGAPMVEKVKEPELPKTLVNCVRRIKEARLRCYCRMAADVITSILQAAGTAFSIYHQIEKRSRPSFYWDRGYTYRDGPGSFDIFEDDDDGWYHSEGKKGKNKKGRGRPGVFRTRGLTDEEYDEFKKRRESRGGKYSIDDYLADREREEELLERDEEEAIFGDGFGLKATRRSRKAERAKLGLVSGGDIRARKPIDWNVVGPSWADDDRQVDYGEKINFEAPVSIWSRVVQFGTGWGFWVSGHVFITAKHVAPPKGTEIFGRKPGDFTVTSSGDFLKYYFTSAVRPDIPAMVLENGCQEGVVASVLVKRASGEMLALAVRMGSQAAIKIGSAVVHGQTGMLLTGSNAKAQDLGTIPGDCGCPYVYKKGNTWVVIGVHVAATRSGNTVIAATHGEPTLEALEFQGPPMLPRPSGTYAGLPIADYGDAPPLSTKTMFWRTSPEKLPPGAWEPAYLGSKDERVDGPSLQQVMRDQLKPYSEPRGLLPPQEILDAVCDAIENRLENTLEPQKPWTFKKACESLDKNTSSGYPYHKQKSKDWTGSAFIGDLGDQATHANNMYEMGKSMRPIYTAALKDELVKPDKIYGKIKKRLLWGSDLGTMIRAARAFGPFCDALKETCIFNPIRVGMSMNEDGPFIFARHANFRYHMDADYTRWDSTQQRAILKRAGDIMVRLSPEPDLARVVMDDLLAPSLLDVGDYKIVVEEGLPSGCPCTTQLNSLAHWILTLCAMVEVTRVDPDIVMQESEFSFYGDDEVVSTNLELDMVKYTMALRRYGLLPTRADKEEGPLERRQTLQGISFLRRAIVGDQFGWYGRLDRASIDRQLLWTKGPNHQNPFETLPGHAQRPSQLMALLGEAAMHGEKYYRTVASRVSKEAAQSGIEMVVPRHRSVLRWVRFGTMDAETPQERSAVFVNEDE.

Residues 1 to 13 (MRMATPSSAPSVR) show a composition bias toward polar residues. The tract at residues 1–56 (MRMATPSSAPSVRNTEKRKNKKASSKASVSFGAPSPLSSESEDEINYMTPPEQEAQ) is disordered. The tract at residues 1–116 (MRMATPSSAP…FRRYPHLRPK (116 aa)) is interaction with host MAP1LC3A/LC3. The interaction with NTPase stretch occupies residues 117–341 (EDRPDAPSHA…ISIFGEWQAE (225 aa)). The interval 244–341 (SPVQDWNVDP…ISIFGEWQAE (98 aa)) is interaction with NS4. Host ER membrane association stretches follow at residues 261-292 (KLRMVSDGILVALSAVIGRPIKNLLASVKPLN) and 302-341 (WTFSGIVNALILLAELFDIFWTPPDVTNWMISIFGEWQAE). The segment at 342-518 (GPFDLALDVV…GKTCFCQNLA (177 aa)) is interaction with NS1-2, NS4 and homooligomerization. The SF3 helicase domain maps to 476 to 641 (RISMARAAFE…DDARARAPGD (166 aa)). ATP is bound at residue 504 to 511 (GRPGIGKT). The tract at residues 595–700 (VIIITTNQQT…AVALVHERHD (106 aa)) is important for mitochondrion targeting. An acidic region spans residues 893-898 (DEEYDE). Tyr-896 carries the post-translational modification O-(5'-phospho-RNA)-tyrosine. Residues 978–994 (WADDDRQVDYGEKINFE) are interaction with host EIF4G. Positions 995-1172 (APVSIWSRVV…AATHGEPTLE (178 aa)) constitute a Peptidase C37 domain. Residues His-1024, Asp-1048, and Cys-1133 each act as for 3CLpro activity in the active site. Residues 1416 to 1537 (RYHMDADYTR…STNLELDMVK (122 aa)) form the RdRp catalytic domain. Mg(2+) contacts are provided by Asp-1420 and Asp-1422. The cysteines at positions 1482 and 1484 are disulfide-linked. Mg(2+) contacts are provided by Asp-1524, Glu-1525, and Ser-1569.

In terms of assembly, homodimer. Interacts with NTPase; this interaction increases the proapoptotic activity of the NTPase and is crucial for the formation of the viral replication complex. Interacts with NS4; this interaction is crucial for the formation of the viral replication complex. Interacts (via N-terminus) with host VAPA. Interacts with host VAPB. Monomer. As to quaternary structure, homooligomer. Interacts with NS1-2; this interaction increases the proapoptotic activity of the NTPase and is crucial for the formation of the viral replication complex. Interacts with NS4; this interaction increases the proapoptotic activity of the NTPase. Interacts with host G3BP1; this interaction leads to the redistribution of G3BP1 and its cellular partners to the viral replication complexes, thereby preventing the assembly of stress granules. In terms of assembly, homodimer. Monomer; in solution. Interacts with NTPase; this interaction increases the proapoptotic activity of the NTPase. Interacts with NS1-2; this interaction is crucial for the formation of the viral replication complex. As to quaternary structure, monomer. Interacts with the RNA-directed RNA polymerase; this interaction induces the multimerization of the RdRp and enhances its activity. Interacts with host IEF4E; this interaction plays a role in translation of viral proteins. Interacts (via C-terminus) with host IEF4G1 (via central domain); this interaction plays a role in translation of viral proteins. In terms of assembly, homohexamer; also forms fibrous hexameric oligomer. Interacts with the viral genome-linked protein; this interaction induces the multimerization of the RdRp and enhances its activity. Requires Mg(2+) as cofactor. Mn(2+) serves as cofactor. Post-translationally, specific enzymatic cleavages in vivo yield mature proteins. 3CLpro is first autocatalytically cleaved, then processes the whole polyprotein. In terms of processing, cleaved by host CASP3/caspase 3 at 18-22 h.p.i. The cleavage allows NS1 secretion, which is essential for intestinal infection and resistance to IFN-lambda. VPg is uridylylated by the polymerase and is covalently attached to the 5'-end of the polyadenylated genomic and subgenomic RNAs. This uridylylated form acts as a nucleotide-peptide primer for the polymerase.

Its subcellular location is the host endoplasmic reticulum membrane. It localises to the secreted. The protein resides in the host endosome membrane. It is found in the host mitochondrion. The protein localises to the host cytoplasm. Its subcellular location is the host perinuclear region. The enzyme catalyses a ribonucleoside 5'-triphosphate + H2O = a ribonucleoside 5'-diphosphate + phosphate + H(+). It carries out the reaction Endopeptidase with a preference for cleavage when the P1 position is occupied by Glu-|-Xaa and the P1' position is occupied by Gly-|-Yaa.. The catalysed reaction is RNA(n) + a ribonucleoside 5'-triphosphate = RNA(n+1) + diphosphate. Its activity is regulated as follows. Inhibited by Suramin, Suramin-related compounds and NF023. Inhibited by PPNDS. Functionally, induces the proliferation of the host smooth ER membranes forming long tubular structures. These remodeled membranes probably form the viral factories that contain the replication complex. May play a role in viral replication by interacting with host VAPA, a vesicle-associated membrane protein that plays a role in SNARE-mediated vesicle fusion. This interaction may target replication complex to intracellular membranes. Its function is as follows. Promotes intestinal tropism and persistent fecal shedding in strain CR6. This function requires Glu-94 and is present in persistant strains. In terms of biological role, displays NTPase activity, but probably no helicase activity. Displays RNA chaperone-like activity and destabilizes dsRNA. Induces the formation of convoluted membranes derived from the host ER. These remodeled membranes probably form the viral factories that contain the replication complex. Initiates host cell death by targeting the mitochondrial outer membrane, leading to the permeabilization of mitochondria, programmed host cell death and viral egress. Externalization of host cardiolipin seems to be involved in the process. Probably plays a role in preventing the assembly of host stress granules. Probable key protein responsible for the formation of membrane alterations by the virus. Induces the formation of convoluted membranes derived from the host ER. These remodeled membranes probably form the viral factories that contain the replication complex. May play a role in targeting replication complex to intracellular membranes. Functionally, viral genome-linked protein is covalently linked to the 5'-end of the positive-strand, negative-strand genomic RNAs and subgenomic RNA. Acts as a genome-linked replication primer. May recruit ribosome to viral RNA thereby promoting viral proteins translation. Interacts with host translation initiation complex to allow the translation of viral proteins. Induces the formation of aggregates of RNA-directed RNA polymerase in the presence of RNA. Through its interaction with the viral RNA-directed RNA polymerase, plays a crucial role in enhancing the polymerase activity. Its function is as follows. Processes the polyprotein. 3CLpro-RdRp is first released by autocleavage, then all other proteins are cleaved. May cleave host polyadenylate-binding protein thereby inhibiting cellular translation. Does not cleave host G3BP1. In terms of biological role, replicates genomic and antigenomic RNA by recognizing replications specific signals. Also transcribes a subgenomic mRNA by initiating RNA synthesis internally on antigenomic RNA. This sgRNA codes for structural proteins. Catalyzes the covalent attachment VPg with viral RNAs. This chain is Genome polyprotein, found in Norovirus (isolate Mouse/NoV/United States/MNV1/2002/GV) (MNV-1).